Reading from the N-terminus, the 893-residue chain is MKNKKALFIPLFIIILFIAFFNKIINFIINIKWFKEVNYLAVYFTKMRAIIILMIPIFIIFFISIWMYYKSLIINKNKSVVDIGLNKNNYGKKLFFIFNFIVSIFLAYIFSSSYWYRILQFNNSVDFNVKDPIFFKDVSFYIFKLPLFESLYKVIISLLLFLVITTFIAYFILEAKYKIQSRKDINLKNINHGIKSFAGKQLAIVSGLIILFISFGHLIKIWNLVYSSNGVSFGASYTDVHATLLFYKIIVVITLISSIVTLLSIVKGKFKPVSVCIGITIFLIVSQNIASFLVQNFIVKSNEKTLEQPYIKNNIDLTRKAFALDDIEIRDFDIKNDLQKQDIADNKASIDNVRINSFKPTLEFYNQVQIIRYYYTFNDIDIDRYNINGKYNQVFLAAREIDTDALNPNTWQNRHLIYTHGFGAVMNKVNSVTSEGQPDFVIKDIPPYNKTNIKLTNPRIYFGEKTNDYVIVNTKINEFDYPREDSNKTNKYNGHAGIKMSFINRLLFAINKKDINFLLSKDIKKDSKIIINRNIVERAKKIAPFLTYDSDPYMVIYNGKIYWIIDAYTTTNRYPYSEPYDSINYIRNSAKVVIDSVDGDTNFYITDKKDPIVNNYAKIFKGLFKEEKDAPKEIREHFRYPKDLFSIQSKVLGKYHVKDPGVFYNGEDLWEVSKDQKHVEGETNTNDAPYIIMKLPDQNKEEMVLLNYFNVMKKDNMIALFGARMDGEQYGKKILYKLPSDKTVYSPYLFKQKINQDTNISKELSLWNREGSKVQYGDTIILPIKNSLLYIEPLYLRASGKNSIPEMKRVILSYNDKLVLSSSIQEGIKEIFNSKDNKINDKNEKDSTKTIDDSKLKKAQEYYNKAIEAQKNGDWTKYGENINELGNILNSIK.

7 consecutive transmembrane segments (helical) span residues 9 to 29, 49 to 69, 94 to 114, 154 to 174, 202 to 222, 246 to 266, and 273 to 293; these read IPLF…NFII, AIII…WMYY, LFFI…SSSY, VIIS…FILE, LAIV…IKIW, FYKI…LSIV, and VSVC…ASFL.

It belongs to the UPF0182 family.

Its subcellular location is the cell membrane. The polypeptide is UPF0182 protein CLM_0018 (Clostridium botulinum (strain Kyoto / Type A2)).